The chain runs to 79 residues: Sulfur carrier protein TusA (79 aa).

Residue C17 is the Cysteine persulfide intermediate of the active site.

This sequence belongs to the sulfur carrier protein TusA family.

The protein resides in the cytoplasm. Functionally, sulfur carrier protein which probably makes part of a sulfur-relay system. This Actinobacillus pleuropneumoniae serotype 5b (strain L20) protein is Sulfur carrier protein TusA.